The following is a 722-amino-acid chain: Fatty acid oxidation complex subunit alpha (722 aa).

Positions 1–189 are enoyl-CoA hydratase/isomerase; sequence MIYQGKSLSA…AQGAIDAVVE (189 aa). Aspartate 296 is a substrate binding site. The interval 311–722 is 3-hydroxyacyl-CoA dehydrogenase; sequence TKAVNKAAVL…SYFTTDVKLA (412 aa). NAD(+) is bound by residues methionine 325, aspartate 344, 401–403, lysine 408, and serine 430; that span reads VVE. The active-site For 3-hydroxyacyl-CoA dehydrogenase activity is the histidine 451. Asparagine 454 is a binding site for NAD(+). Positions 501 and 661 each coordinate substrate.

This sequence in the N-terminal section; belongs to the enoyl-CoA hydratase/isomerase family. The protein in the C-terminal section; belongs to the 3-hydroxyacyl-CoA dehydrogenase family. Heterotetramer of two alpha chains (FadB) and two beta chains (FadA).

It carries out the reaction a (3S)-3-hydroxyacyl-CoA + NAD(+) = a 3-oxoacyl-CoA + NADH + H(+). The enzyme catalyses a (3S)-3-hydroxyacyl-CoA = a (2E)-enoyl-CoA + H2O. The catalysed reaction is a 4-saturated-(3S)-3-hydroxyacyl-CoA = a (3E)-enoyl-CoA + H2O. It catalyses the reaction (3S)-3-hydroxybutanoyl-CoA = (3R)-3-hydroxybutanoyl-CoA. It carries out the reaction a (3Z)-enoyl-CoA = a 4-saturated (2E)-enoyl-CoA. The enzyme catalyses a (3E)-enoyl-CoA = a 4-saturated (2E)-enoyl-CoA. Its pathway is lipid metabolism; fatty acid beta-oxidation. Its function is as follows. Involved in the aerobic and anaerobic degradation of long-chain fatty acids via beta-oxidation cycle. Catalyzes the formation of 3-oxoacyl-CoA from enoyl-CoA via L-3-hydroxyacyl-CoA. It can also use D-3-hydroxyacyl-CoA and cis-3-enoyl-CoA as substrate. The sequence is that of Fatty acid oxidation complex subunit alpha from Colwellia psychrerythraea (strain 34H / ATCC BAA-681) (Vibrio psychroerythus).